The primary structure comprises 802 residues: Lon protease (802 aa).

Residues 21–215 (LPLLPVRDII…KIIQILNAEI (195 aa)) form the Lon N-terminal domain. 367–374 (GPPGVGKT) contacts ATP. One can recognise a Lon proteolytic domain in the interval 603–784 (ENDVGVATGL…DEVISLTIER (182 aa)). Residues Ser-690 and Lys-733 contribute to the active site.

It belongs to the peptidase S16 family. In terms of assembly, homohexamer. Organized in a ring with a central cavity.

It is found in the cytoplasm. It catalyses the reaction Hydrolysis of proteins in presence of ATP.. ATP-dependent serine protease that mediates the selective degradation of mutant and abnormal proteins as well as certain short-lived regulatory proteins. Required for cellular homeostasis and for survival from DNA damage and developmental changes induced by stress. Degrades polypeptides processively to yield small peptide fragments that are 5 to 10 amino acids long. Binds to DNA in a double-stranded, site-specific manner. The polypeptide is Lon protease (Endomicrobium trichonymphae).